We begin with the raw amino-acid sequence, 451 residues long: Transcription factor TGAL8 (451 aa).

Over residues 1–22 (MAYPSTSGMIQASSSLHGSITR) the composition is skewed to polar residues. Disordered stretches follow at residues 1–32 (MAYP…DMPS) and 70–151 (FPSQ…PKTL). Basic and acidic residues predominate over residues 141 to 150 (KGPKTPDPKT). Positions 147 to 191 (DPKTLRRLAQNREAARKSRLRKKAYIQQLETGRIRLAHLEQEIQF) constitute a bZIP domain. A basic motif region spans residues 149-169 (KTLRRLAQNREAARKSRLRKK). A leucine-zipper region spans residues 175-189 (LETGRIRLAHLEQEI). Residues 208–444 (AALFNLEYER…RALALFWTTT (237 aa)) form the DOG1 domain.

This sequence belongs to the bZIP family. In terms of assembly, interacts with NPR5/NH4, NH5.1 and NH5.2.

The protein resides in the nucleus. Transcriptional regulator involved in defense response. This Oryza sativa subsp. japonica (Rice) protein is Transcription factor TGAL8.